We begin with the raw amino-acid sequence, 309 residues long: MLCRSNDELELLISQARAFAGQGEVAQYIPALAAAHKHELSVALYYPDGKGFMAGDTEENFTLQSISKVLSLALALIDQGEECVFTRVGKEPTGDPFNSIAKLETNKPSKPLNPMINAGALAVTHMIKGNTAGERFERLLDFIRCLTGNETITYNKEIAKSEFETAHLNRALVYFMKEHGVIDEDVEELMDLYTKQCAIEMNCIDLARVGCVLAMDGCDPDTGKQLLPIDVARICKTFMVTCGMYNASGEFAINVGIPAKSGVSGGIMGAVPKKCGIGICGPSLDEKGNSIAGIKLLEMMAKRYSLSMF.

The substrate site is built by S65, N117, E162, N169, Y193, Y245, and V263.

It belongs to the glutaminase family. Homotetramer.

The catalysed reaction is L-glutamine + H2O = L-glutamate + NH4(+). The sequence is that of Glutaminase from Shouchella clausii (strain KSM-K16) (Alkalihalobacillus clausii).